Here is a 351-residue protein sequence, read N- to C-terminus: Cobalt-precorrin-5B C(1)-methyltransferase (351 aa).

It belongs to the CbiD family.

It carries out the reaction Co-precorrin-5B + S-adenosyl-L-methionine = Co-precorrin-6A + S-adenosyl-L-homocysteine. It functions in the pathway cofactor biosynthesis; adenosylcobalamin biosynthesis; cob(II)yrinate a,c-diamide from sirohydrochlorin (anaerobic route): step 6/10. Functionally, catalyzes the methylation of C-1 in cobalt-precorrin-5B to form cobalt-precorrin-6A. The protein is Cobalt-precorrin-5B C(1)-methyltransferase of Thermosipho africanus (strain TCF52B).